An 862-amino-acid polypeptide reads, in one-letter code: Leucine--tRNA ligase (862 aa).

The short motif at 44-54 is the 'HIGH' region element; that stretch reads PYPSGRIHMGH. Positions 622-626 match the 'KMSKS' region motif; sequence KMSKS. Residue lysine 625 coordinates ATP.

It belongs to the class-I aminoacyl-tRNA synthetase family.

The protein resides in the cytoplasm. It catalyses the reaction tRNA(Leu) + L-leucine + ATP = L-leucyl-tRNA(Leu) + AMP + diphosphate. The protein is Leucine--tRNA ligase of Rhodospirillum rubrum (strain ATCC 11170 / ATH 1.1.1 / DSM 467 / LMG 4362 / NCIMB 8255 / S1).